The sequence spans 314 residues: tRNA-cytidine(32) 2-sulfurtransferase (314 aa).

The PP-loop motif signature appears at 39 to 44 (SGGKDS). Positions 114, 117, and 205 each coordinate [4Fe-4S] cluster.

This sequence belongs to the TtcA family. In terms of assembly, homodimer. Requires Mg(2+) as cofactor. [4Fe-4S] cluster serves as cofactor.

It is found in the cytoplasm. The catalysed reaction is cytidine(32) in tRNA + S-sulfanyl-L-cysteinyl-[cysteine desulfurase] + AH2 + ATP = 2-thiocytidine(32) in tRNA + L-cysteinyl-[cysteine desulfurase] + A + AMP + diphosphate + H(+). It functions in the pathway tRNA modification. Functionally, catalyzes the ATP-dependent 2-thiolation of cytidine in position 32 of tRNA, to form 2-thiocytidine (s(2)C32). The sulfur atoms are provided by the cysteine/cysteine desulfurase (IscS) system. The protein is tRNA-cytidine(32) 2-sulfurtransferase of Cupriavidus necator (strain ATCC 17699 / DSM 428 / KCTC 22496 / NCIMB 10442 / H16 / Stanier 337) (Ralstonia eutropha).